The chain runs to 598 residues: MLELWGVLSLTSLGVMVIFLFSKIKSSFAESVKYAGYMNAVLLSILLMSDESEMLFLKWEWVKLGGYSLMISFRFDLYTCCFFVVGLYVTWNILMFSFYYMSTDPRIDLFCKYLGLFLIAMLLLVSAESLFQLLIGWEGVGIMSYLLISWWYARSDANTAALQAIFYNRVGDIGLLIMLMWSLVTLGDWSFTGLYALDFVNTFFLLGVVLAAAGKSAQLGLHPWLPAAMEGPTPVSSLLHSSTMVVAGVFLLIRFSPIILNHKEIQLMVFFLGTMTTLFSAICALAQNDMKKVVAFSTASQLGLMVTAVGAGAPQLAFLHICMHAFFKAMLFMCSGSFIHGLQNEQDVRKMGGLYSAAPITSVCFFIGSAALMGVPFLAGFFSKDPIIEIININNLNSWAVGLVLIATSFTAAYSVRLLYFSVGGVSRMLVLQPMNEEYGNLIGPLQRLAYSSVIAGVVFIYFLSPNQISCLSLPLSLKLAAVFVTLVGGLIAWDVVNLLHREESVTNIPELAFEAQVGFYPLIMHKLIPKVWLNMGEMYQMQVMDRGWTELALPQGLGGNYKIMADNVVNAQTSLIKMYIAVMVMMGGLILGIMICL.

16 helical membrane passes run 1–21 (MLEL…IFLF), 28–48 (FAES…ILLM), 81–101 (CFFV…FYYM), 115–135 (GLFL…QLLI), 171–191 (GDIG…DWSF), 193–213 (GLYA…LAAA), 233–253 (TPVS…FLLI), 265–285 (IQLM…ICAL), 293–312 (VVAF…VGAG), 323–343 (MHAF…HGLQ), 362–382 (SVCF…AGFF), 399–421 (WAVG…LLYF), 454–474 (VIAG…CLSL), 480–500 (LAAV…VNLL), 509–529 (IPEL…HKLI), and 576–596 (LIKM…GIMI).

The protein belongs to the complex I subunit 5 family.

The protein resides in the mitochondrion inner membrane. The enzyme catalyses a ubiquinone + NADH + 5 H(+)(in) = a ubiquinol + NAD(+) + 4 H(+)(out). Its function is as follows. Core subunit of the mitochondrial membrane respiratory chain NADH dehydrogenase (Complex I) that is believed to belong to the minimal assembly required for catalysis. Complex I functions in the transfer of electrons from NADH to the respiratory chain. The immediate electron acceptor for the enzyme is believed to be ubiquinone. The polypeptide is NADH-ubiquinone oxidoreductase chain 5 (ND5) (Branchiostoma lanceolatum (Common lancelet)).